A 276-amino-acid polypeptide reads, in one-letter code: Large ribosomal subunit protein uL2 (276 aa).

Disordered stretches follow at residues 37-59 (QIQKSGRNNNGHITTRHKGGGHK) and 225-276 (VMNP…RHKR). Residues 39-49 (QKSGRNNNGHI) are compositionally biased toward polar residues. A compositionally biased stretch (basic residues) spans 50-59 (TTRHKGGGHK).

This sequence belongs to the universal ribosomal protein uL2 family. In terms of assembly, part of the 50S ribosomal subunit. Forms a bridge to the 30S subunit in the 70S ribosome.

Functionally, one of the primary rRNA binding proteins. Required for association of the 30S and 50S subunits to form the 70S ribosome, for tRNA binding and peptide bond formation. It has been suggested to have peptidyltransferase activity; this is somewhat controversial. Makes several contacts with the 16S rRNA in the 70S ribosome. The chain is Large ribosomal subunit protein uL2 from Ralstonia pickettii (strain 12J).